The following is a 492-amino-acid chain: Linolenate hydroperoxide lyase, chloroplastic (492 aa).

Residues 1–33 form a disordered region; the sequence is MLLRTMAATSPRPPPSTSLTSQQPPSPPSQLPL. The transit peptide at 1-34 directs the protein to the chloroplast; that stretch reads MLLRTMAATSPRPPPSTSLTSQQPPSPPSQLPLR. Residue Cys-454 coordinates heme.

This sequence belongs to the cytochrome P450 family. The cofactor is heme. Expressed in roots, leaves, flowers and siliques.

It is found in the plastid. The protein resides in the chloroplast. Catalyzes the conversion of (9Z,11E,15Z)-(13S)-hydroperoxyoctadeca-9,11,15-trienoate to (9Z)-12-oxo-dodec-9-enoate and cis-3-hexenal. Possesses low activity toward (9Z,11E)-(13S)-13-hydroperoxyoctadeca-9,11-dienoate. Required for the synthesis of the green leaf volatiles (GLVs) hexanal and trans-2-hexenal. This is Linolenate hydroperoxide lyase, chloroplastic from Arabidopsis thaliana (Mouse-ear cress).